The primary structure comprises 410 residues: WD repeat and FYVE domain-containing protein 1 (410 aa).

WD repeat units follow at residues 22-61, 66-105, 112-150, 153-192, 197-236, and 240-279; these read GHQD…QYWP, TMAS…NKMN, AHQN…NMLG, FFTS…CSVI, GHEG…GRTL, and GHHD…EEAP. The FYVE-type zinc finger occupies 281–352; sequence WLESDSCQKC…VCDSCYDSIK (72 aa). Residues Cys287, Cys290, Cys314, Cys317, Cys322, Cys325, Cys344, and Cys347 each coordinate Zn(2+). The stretch at 364 to 403 is one WD 7 repeat; it reads EGKHNISHMSMDIARGLMVTCGTDRIVKIWDMTPVVGCSL. Ser408 bears the Phosphoserine mark.

As to quaternary structure, binds PtdIns3P in vitro with high specificity over other phosphoinositides. Interacts (via WD repeat 2) with tyrosine-phosphorylated TLR3 (via TIR domain) in response to poly(I:C). Interacts with TICAM1 in response to poly(I:C). Interacts with TLR4 in response to LPS.

It is found in the early endosome. Functionally, positively regulates TLR3- and TLR4-mediated signaling pathways by bridging the interaction between TLR3 or TLR4 and TICAM1. Promotes TLR3/4 ligand-induced activation of transcription factors IRF3 and NF-kappa-B, as well as the production of IFN-beta and inflammatory cytokines. The chain is WD repeat and FYVE domain-containing protein 1 (WDFY1) from Homo sapiens (Human).